A 363-amino-acid polypeptide reads, in one-letter code: Protein-glutamate methylesterase/protein-glutamine glutaminase 2 (363 aa).

In terms of domain architecture, Response regulatory spans 7 to 124 (RVLVVDDSAL…SLTLENVADE (118 aa)). Asp-58 bears the 4-aspartylphosphate mark. The 198-residue stretch at 160–357 (PVASRTTPSK…NLLMVQSAAQ (198 aa)) folds into the CheB-type methylesterase domain. Active-site residues include Ser-176, His-203, and Asp-299.

This sequence belongs to the CheB family. In terms of processing, phosphorylated by CheA. Phosphorylation of the N-terminal regulatory domain activates the methylesterase activity.

It localises to the cytoplasm. It catalyses the reaction [protein]-L-glutamate 5-O-methyl ester + H2O = L-glutamyl-[protein] + methanol + H(+). The catalysed reaction is L-glutaminyl-[protein] + H2O = L-glutamyl-[protein] + NH4(+). Involved in chemotaxis. Part of a chemotaxis signal transduction system that modulates chemotaxis in response to various stimuli. Catalyzes the demethylation of specific methylglutamate residues introduced into the chemoreceptors (methyl-accepting chemotaxis proteins or MCP) by CheR. Also mediates the irreversible deamidation of specific glutamine residues to glutamic acid. In Koribacter versatilis (strain Ellin345), this protein is Protein-glutamate methylesterase/protein-glutamine glutaminase 2.